A 268-amino-acid polypeptide reads, in one-letter code: Tryptophan synthase alpha chain (268 aa).

Active-site proton acceptor residues include Glu-49 and Asp-60.

It belongs to the TrpA family. As to quaternary structure, tetramer of two alpha and two beta chains.

It carries out the reaction (1S,2R)-1-C-(indol-3-yl)glycerol 3-phosphate + L-serine = D-glyceraldehyde 3-phosphate + L-tryptophan + H2O. Its pathway is amino-acid biosynthesis; L-tryptophan biosynthesis; L-tryptophan from chorismate: step 5/5. Its function is as follows. The alpha subunit is responsible for the aldol cleavage of indoleglycerol phosphate to indole and glyceraldehyde 3-phosphate. The chain is Tryptophan synthase alpha chain from Xylella fastidiosa (strain M23).